We begin with the raw amino-acid sequence, 352 residues long: DNA-directed RNA polymerase subunit alpha (352 aa).

The tract at residues 1-236 is alpha N-terminal domain (alpha-NTD); sequence MTVNIRNWQE…DQLQVFVHFE (236 aa). Residues 257–352 form an alpha C-terminal domain (alpha-CTD) region; sequence SDVNQLNRFL…AKKLEQELLG (96 aa).

The protein belongs to the RNA polymerase alpha chain family. As to quaternary structure, homodimer. The RNAP catalytic core consists of 2 alpha, 1 beta, 1 beta' and 1 omega subunit. When a sigma factor is associated with the core the holoenzyme is formed, which can initiate transcription.

The catalysed reaction is RNA(n) + a ribonucleoside 5'-triphosphate = RNA(n+1) + diphosphate. Its function is as follows. DNA-dependent RNA polymerase catalyzes the transcription of DNA into RNA using the four ribonucleoside triphosphates as substrates. The protein is DNA-directed RNA polymerase subunit alpha of Sphingopyxis alaskensis (strain DSM 13593 / LMG 18877 / RB2256) (Sphingomonas alaskensis).